Here is a 59-residue protein sequence, read N- to C-terminus: Large ribosomal subunit protein bL32 (59 aa).

Positions 1 to 23 are disordered; sequence MAVQQNKKSPSKRGMHRSHDFLT.

It belongs to the bacterial ribosomal protein bL32 family.

The sequence is that of Large ribosomal subunit protein bL32 from Burkholderia multivorans (strain ATCC 17616 / 249).